The chain runs to 428 residues: Enolase (428 aa).

Glutamine 173 lines the (2R)-2-phosphoglycerate pocket. Glutamate 217 functions as the Proton donor in the catalytic mechanism. Residues aspartate 253, glutamate 294, and aspartate 320 each coordinate Mg(2+). 4 residues coordinate (2R)-2-phosphoglycerate: lysine 345, arginine 374, serine 375, and lysine 396. Catalysis depends on lysine 345, which acts as the Proton acceptor.

This sequence belongs to the enolase family. The cofactor is Mg(2+).

The protein localises to the cytoplasm. It is found in the secreted. Its subcellular location is the cell surface. It catalyses the reaction (2R)-2-phosphoglycerate = phosphoenolpyruvate + H2O. The protein operates within carbohydrate degradation; glycolysis; pyruvate from D-glyceraldehyde 3-phosphate: step 4/5. In terms of biological role, catalyzes the reversible conversion of 2-phosphoglycerate (2-PG) into phosphoenolpyruvate (PEP). It is essential for the degradation of carbohydrates via glycolysis. This is Enolase from Methanosarcina mazei (strain ATCC BAA-159 / DSM 3647 / Goe1 / Go1 / JCM 11833 / OCM 88) (Methanosarcina frisia).